We begin with the raw amino-acid sequence, 245 residues long: Polyhedrin (245 aa).

Positions 32–35 (KRKK) are nuclear localization signal.

This sequence belongs to the polyhedrin family.

It localises to the host nucleus. Major component of the virus occlusion bodies which are large proteinaceous structures termed polyhedra. These structures serve as the protective package for the virus particles outside the infected host and allow natural transmission of virus between insect hosts, assisting persistence in the environment. Forms the paracrystalline lattice of polyhedra and interacts with enveloped virions as well as other accessory molecules and structures to form a mature viral occlusion body. This chain is Polyhedrin (PH), found in Lepidoptera (butterflies and moths).